Reading from the N-terminus, the 142-residue chain is Putative pre-16S rRNA nuclease (142 aa).

This sequence belongs to the YqgF nuclease family.

The protein localises to the cytoplasm. Could be a nuclease involved in processing of the 5'-end of pre-16S rRNA. In Staphylococcus epidermidis (strain ATCC 35984 / DSM 28319 / BCRC 17069 / CCUG 31568 / BM 3577 / RP62A), this protein is Putative pre-16S rRNA nuclease.